Reading from the N-terminus, the 102-residue chain is Small ribosomal subunit protein uS10 (102 aa).

It belongs to the universal ribosomal protein uS10 family. Part of the 30S ribosomal subunit.

In terms of biological role, involved in the binding of tRNA to the ribosomes. The protein is Small ribosomal subunit protein uS10 of Bartonella henselae (strain ATCC 49882 / DSM 28221 / CCUG 30454 / Houston 1) (Rochalimaea henselae).